A 230-amino-acid polypeptide reads, in one-letter code: Orotidine 5'-phosphate decarboxylase (230 aa).

Residues Asp-8, Lys-30, 59–68 (DLKLYDIPNT), Thr-118, Arg-178, Gln-187, Gly-207, and Arg-208 contribute to the substrate site. Lys-61 acts as the Proton donor in catalysis.

This sequence belongs to the OMP decarboxylase family. Type 1 subfamily. Homodimer.

The catalysed reaction is orotidine 5'-phosphate + H(+) = UMP + CO2. It functions in the pathway pyrimidine metabolism; UMP biosynthesis via de novo pathway; UMP from orotate: step 2/2. In terms of biological role, catalyzes the decarboxylation of orotidine 5'-monophosphate (OMP) to uridine 5'-monophosphate (UMP). In Sulfurovum sp. (strain NBC37-1), this protein is Orotidine 5'-phosphate decarboxylase.